We begin with the raw amino-acid sequence, 440 residues long: UDP-N-acetylmuramoylalanine--D-glutamate ligase (440 aa).

Position 112–118 (112–118) interacts with ATP; that stretch reads GSNGKST.

Belongs to the MurCDEF family.

It is found in the cytoplasm. It carries out the reaction UDP-N-acetyl-alpha-D-muramoyl-L-alanine + D-glutamate + ATP = UDP-N-acetyl-alpha-D-muramoyl-L-alanyl-D-glutamate + ADP + phosphate + H(+). It functions in the pathway cell wall biogenesis; peptidoglycan biosynthesis. Its function is as follows. Cell wall formation. Catalyzes the addition of glutamate to the nucleotide precursor UDP-N-acetylmuramoyl-L-alanine (UMA). This Blochmanniella pennsylvanica (strain BPEN) protein is UDP-N-acetylmuramoylalanine--D-glutamate ligase.